The chain runs to 494 residues: Chromosomal replication initiator protein DnaA (494 aa).

The interval 1 to 103 is domain I, interacts with DnaA modulators; that stretch reads MTNIGGPVVE…LRVEVIVRGM (103 aa). Residues 103 to 148 form a domain II region; it reads MKRVSKGVVCRTSAAPVVLEGQTASSFVESYTEPSVKDIEAGVFGS. Residues 149–371 are domain III, AAA+ region; sequence PLDSRYTFES…GAFNQLLFRQ (223 aa). ATP contacts are provided by Gly195, Gly197, Lys198, and Thr199. The domain IV, binds dsDNA stretch occupies residues 372–494; it reads SFESDLSLER…LKRLIGEQAA (123 aa).

It belongs to the DnaA family. As to quaternary structure, oligomerizes as a right-handed, spiral filament on DNA at oriC.

The protein localises to the cytoplasm. In terms of biological role, plays an essential role in the initiation and regulation of chromosomal replication. ATP-DnaA binds to the origin of replication (oriC) to initiate formation of the DNA replication initiation complex once per cell cycle. Binds the DnaA box (a 9 base pair repeat at the origin) and separates the double-stranded (ds)DNA. Forms a right-handed helical filament on oriC DNA; dsDNA binds to the exterior of the filament while single-stranded (ss)DNA is stabiized in the filament's interior. The ATP-DnaA-oriC complex binds and stabilizes one strand of the AT-rich DNA unwinding element (DUE), permitting loading of DNA polymerase. After initiation quickly degrades to an ADP-DnaA complex that is not apt for DNA replication. Binds acidic phospholipids. The chain is Chromosomal replication initiator protein DnaA from Bartonella quintana (strain Toulouse) (Rochalimaea quintana).